A 253-amino-acid polypeptide reads, in one-letter code: Small ribosomal subunit protein uS2 (253 aa).

Ser-2 carries the post-translational modification N-acetylserine. The tract at residues 212–253 is disordered; the sequence is QQAAEEAAAGEEDDEAKEEVAAEEQTEAADWAEGQSEEVASW. A compositionally biased stretch (acidic residues) spans 219–238; it reads AAGEEDDEAKEEVAAEEQTE.

This sequence belongs to the universal ribosomal protein uS2 family. In terms of assembly, component of the small ribosomal subunit. Mature ribosomes consist of a small (40S) and a large (60S) subunit. The 40S subunit contains about 33 different proteins and 1 molecule of RNA (18S). The 60S subunit contains about 49 different proteins and 3 molecules of RNA (25S, 5.8S and 5S). Interacts with RPS21.

The protein localises to the cytoplasm. Required for the assembly and/or stability of the 40S ribosomal subunit. Required for the processing of the 20S rRNA-precursor to mature 18S rRNA in a late step of the maturation of 40S ribosomal subunits. The sequence is that of Small ribosomal subunit protein uS2 from Eremothecium gossypii (strain ATCC 10895 / CBS 109.51 / FGSC 9923 / NRRL Y-1056) (Yeast).